Consider the following 58-residue polypeptide: Large ribosomal subunit protein bL32 (58 aa).

This sequence belongs to the bacterial ribosomal protein bL32 family.

In Carboxydothermus hydrogenoformans (strain ATCC BAA-161 / DSM 6008 / Z-2901), this protein is Large ribosomal subunit protein bL32.